The chain runs to 603 residues: Elongation factor 4 (603 aa).

In terms of domain architecture, tr-type G spans 6–188 (KYVRNFSIIA…DIVKNVPAPI (183 aa)). GTP is bound by residues 18 to 23 (DHGKST) and 135 to 138 (NKID).

It belongs to the TRAFAC class translation factor GTPase superfamily. Classic translation factor GTPase family. LepA subfamily.

The protein localises to the cell membrane. The catalysed reaction is GTP + H2O = GDP + phosphate + H(+). Required for accurate and efficient protein synthesis under certain stress conditions. May act as a fidelity factor of the translation reaction, by catalyzing a one-codon backward translocation of tRNAs on improperly translocated ribosomes. Back-translocation proceeds from a post-translocation (POST) complex to a pre-translocation (PRE) complex, thus giving elongation factor G a second chance to translocate the tRNAs correctly. Binds to ribosomes in a GTP-dependent manner. The sequence is that of Elongation factor 4 from Finegoldia magna (strain ATCC 29328 / DSM 20472 / WAL 2508) (Peptostreptococcus magnus).